The chain runs to 694 residues: Putative L-type lectin-domain containing receptor kinase II.2 (694 aa).

A signal peptide spans methionine 1–alanine 24. Over glutamine 25 to asparagine 318 the chain is Extracellular. Residues arginine 27 to lysine 272 form a legume-lectin like region. 10 N-linked (GlcNAc...) asparagine glycosylation sites follow: asparagine 57, asparagine 58, asparagine 73, asparagine 131, asparagine 172, asparagine 183, asparagine 201, asparagine 208, asparagine 240, and asparagine 246. Residues serine 283–lysine 314 form a disordered region. The span at proline 289 to proline 309 shows a compositional bias: pro residues. A helical membrane pass occupies residues isoleucine 319–leucine 339. Residues tyrosine 340–arginine 694 lie on the Cytoplasmic side of the membrane. One can recognise a Protein kinase domain in the interval phenylalanine 375–isoleucine 650. ATP is bound by residues leucine 381 to valine 389 and lysine 403. Catalysis depends on aspartate 500, which acts as the Proton acceptor.

The protein in the C-terminal section; belongs to the protein kinase superfamily. Ser/Thr protein kinase family. This sequence in the N-terminal section; belongs to the leguminous lectin family.

It localises to the cell membrane. The enzyme catalyses L-seryl-[protein] + ATP = O-phospho-L-seryl-[protein] + ADP + H(+). It catalyses the reaction L-threonyl-[protein] + ATP = O-phospho-L-threonyl-[protein] + ADP + H(+). The protein is Putative L-type lectin-domain containing receptor kinase II.2 (LECRK22) of Arabidopsis thaliana (Mouse-ear cress).